The following is a 182-amino-acid chain: Inner membrane assembly complex subunit 17 (182 aa).

The transit peptide at 1-45 (MLKRRSNALITLSRTKLFPITTVAYYHRRLLNQQRRAVSTSPKKE) directs the protein to the mitochondrion. Over 46-107 (IKSLEDLANL…EIPVKRFIRP (62 aa)) the chain is Mitochondrial matrix. The helical transmembrane segment at 108-127 (LWMFILMGSSVYLLLHFSWW) threads the bilayer. Positions 128-158 (KLEHEERESQLKKEVEILEHQLNELIIQDKT) form a coiled coil. At 128-182 (KLEHEERESQLKKEVEILEHQLNELIIQDKTHNTSRGKGSNESTHMKPWYRRWFW) the chain is on the mitochondrial intermembrane side.

This sequence belongs to the INA17 family. Component of the inner membrane assembly (INA) complex, composed of INA17 and INA22. Interacts with a subset of F(1)F(0)-ATP synthase subunits of the F(1)-domain and the peripheral stalk.

The protein localises to the mitochondrion inner membrane. Its function is as follows. Component of the INA complex (INAC) that promotes the biogenesis of mitochondrial F(1)F(0)-ATP synthase. INAC facilitates the assembly of the peripheral stalk and promotes the assembly of the catalytic F(1)-domain with the membrane-embedded F(0)-domain. In Saccharomyces cerevisiae (strain YJM789) (Baker's yeast), this protein is Inner membrane assembly complex subunit 17.